The following is a 206-amino-acid chain: Isochorismatase family protein 1B (206 aa).

It belongs to the isochorismatase family.

The chain is Isochorismatase family protein 1B from Dictyostelium discoideum (Social amoeba).